Consider the following 835-residue polypeptide: Protein translocase subunit SecA 1 (835 aa).

ATP contacts are provided by residues Gln-85, 103 to 107, and Asp-492; that span reads GEGKT. Residues 788–807 are disordered; the sequence is VQGEAVHPSSDGEEAKKKPV. Residues Cys-819, Cys-821, Cys-830, and Cys-831 each contribute to the Zn(2+) site.

The protein belongs to the SecA family. As to quaternary structure, monomer and homodimer. Part of the essential Sec protein translocation apparatus which comprises SecA, SecYEG and auxiliary proteins SecDF. Other proteins may also be involved. The cofactor is Zn(2+).

The protein localises to the cell membrane. The protein resides in the cytoplasm. It catalyses the reaction ATP + H2O + cellular proteinSide 1 = ADP + phosphate + cellular proteinSide 2.. Its function is as follows. Part of the Sec protein translocase complex. Interacts with the SecYEG preprotein conducting channel. Has a central role in coupling the hydrolysis of ATP to the transfer of proteins into and across the cell membrane, serving as an ATP-driven molecular motor driving the stepwise translocation of polypeptide chains across the membrane. This is Protein translocase subunit SecA 1 from Bacillus thuringiensis (strain Al Hakam).